Reading from the N-terminus, the 408-residue chain is DNA replication and repair protein RecF (408 aa).

An ATP-binding site is contributed by 30 to 37 (GSNGQGKT). 2 disordered regions span residues 220-252 (DHGP…DGGR) and 389-408 (SPTP…GGAA). Over residues 389–402 (SPTPASASEPASPG) the composition is skewed to low complexity.

It belongs to the RecF family.

It is found in the cytoplasm. Functionally, the RecF protein is involved in DNA metabolism; it is required for DNA replication and normal SOS inducibility. RecF binds preferentially to single-stranded, linear DNA. It also seems to bind ATP. This is DNA replication and repair protein RecF from Clavibacter sepedonicus (Clavibacter michiganensis subsp. sepedonicus).